A 255-amino-acid polypeptide reads, in one-letter code: Venom allergen-1 (255 aa).

The signal sequence occupies residues 1–21 (MASHVIVKFITAAILIGSCYA). An SCP domain is found at 65 to 210 (LKKHNELRAE…VIKYYLVCNY (146 aa)). N-linked (GlcNAc...) asparagine glycosylation is found at asparagine 146 and asparagine 209.

This sequence belongs to the CRISP family. As to quaternary structure, interacts with human LRPPRC; the interaction interrupts association between BECN1 and LRPPRC. Interacts with human CD4. (Microbial infection) Interacts with Zika virus envelope protein E and Zika virus-like particles; the interaction does not affect Zika virus replication in human endothelial cells and keratinocytes. Saliva (at protein level). Female salivary gland. No or low-level expression in female hemolymph, midgut, Malpighian tubule system and ovary. No or low-level expression in male tissues.

It is found in the secreted. The protein localises to the host endosome. It localises to the host mitochondrion. Functionally, activates autophagy in human monocytic cells, dendritic cells and macrophages. Promotes activation of human CD4(+) T-cells. Does not affect cytokine expression in human monocytic cells. (Microbial infection) Promotes dengue virus type 2 replication in human monocytic cells, dendritic cells and macrophages. Pro-viral properties are linked to BECN1-mediated autophagy activation in the host. Does not directly interact with the purified envelope protein of dengue virus type 2. In terms of biological role, (Microbial infection) Promotes Zika virus replication in human monocytic cells, dendritic cells and macrophages. Facilitates Zika virus transmission from infected mosquitoes to the host in mouse model. Pro-viral properties are linked to BECN1-mediated autophagy activation in the host. Does not affect Zika virus replication in human endothelial cells and keratinocytes. Its function is as follows. (Microbial infection) Promotes Semliki Forest virus replication in human monocytic cells. Functionally, (Microbial infection) Does not influence Batai virus replication in human monocytic cells. The polypeptide is Venom allergen-1 (Aedes aegypti (Yellowfever mosquito)).